The following is a 191-amino-acid chain: Accessory gene regulator protein B (191 aa).

Transmembrane regions (helical) follow at residues 45-65 (IVVYGLALLFHVFLYTLTVHL), 81-101 (STFACYIESIILFVILPWILI), 108-128 (IFMIVLAAVAFILICLYSPAI), 144-164 (ITAIFVAGILLIISFFIKQPF), and 165-185 (NELVQLGIVLIGAAQLPIFFP).

This sequence belongs to the AgrB family.

It is found in the cell membrane. Functionally, essential for the production of a quorum sensing system signal molecule, the autoinducing peptide (AIP). This quorum sensing system is responsible for the regulation of the expression of virulence factor genes. Involved in the proteolytic processing of AgrD, the precursor of AIP. This chain is Accessory gene regulator protein B, found in Staphylococcus carnosus (strain TM300).